The primary structure comprises 485 residues: Warthog protein 1 (485 aa).

An N-terminal signal peptide occupies residues Met1–Ser21. The tract at residues Asp236–Pro258 is disordered. The span at Leu239–Ser252 shows a compositional bias: polar residues.

It belongs to the hedgehog family. The C-terminal domain displays an autoproteolysis activity.

The protein resides in the secreted. Its subcellular location is the cell surface. It localises to the cell membrane. It is found in the extracellular space. Its function is as follows. Intercellular signal essential for a variety of patterning events during development. In Caenorhabditis elegans, this protein is Warthog protein 1 (wrt-1).